Consider the following 172-residue polypeptide: Putative phosphoesterase BCAH820_1309 (172 aa).

Catalysis depends on H34, which acts as the Proton donor. Short sequence motifs (HXTX) lie at residues H34 to L37 and H115 to I118. Residue H115 is the Proton acceptor of the active site.

Belongs to the 2H phosphoesterase superfamily. YjcG family.

This chain is Putative phosphoesterase BCAH820_1309, found in Bacillus cereus (strain AH820).